The following is a 50-amino-acid chain: Large ribosomal subunit protein bL33B (50 aa).

This sequence belongs to the bacterial ribosomal protein bL33 family.

This chain is Large ribosomal subunit protein bL33B, found in Metamycoplasma arthritidis (strain 158L3-1) (Mycoplasma arthritidis).